Here is a 543-residue protein sequence, read N- to C-terminus: Light-independent protochlorophyllide reductase subunit B (543 aa).

D36 contacts [4Fe-4S] cluster. The active-site Proton donor is the D287. Residue 422–423 participates in substrate binding; sequence GL.

The protein belongs to the ChlB/BchB/BchZ family. In terms of assembly, protochlorophyllide reductase is composed of three subunits; BchL, BchN and BchB. Forms a heterotetramer of two BchB and two BchN subunits. It depends on [4Fe-4S] cluster as a cofactor.

It catalyses the reaction chlorophyllide a + oxidized 2[4Fe-4S]-[ferredoxin] + 2 ADP + 2 phosphate = protochlorophyllide a + reduced 2[4Fe-4S]-[ferredoxin] + 2 ATP + 2 H2O. The protein operates within porphyrin-containing compound metabolism; bacteriochlorophyll biosynthesis (light-independent). Functionally, component of the dark-operative protochlorophyllide reductase (DPOR) that uses Mg-ATP and reduced ferredoxin to reduce ring D of protochlorophyllide (Pchlide) to form chlorophyllide a (Chlide). This reaction is light-independent. The NB-protein (BchN-BchB) is the catalytic component of the complex. This chain is Light-independent protochlorophyllide reductase subunit B, found in Rubrivivax gelatinosus (strain NBRC 100245 / IL144).